A 112-amino-acid polypeptide reads, in one-letter code: Nitrogen regulatory protein P-II (112 aa).

O-UMP-tyrosine is present on Tyr-51.

This sequence belongs to the P(II) protein family. As to quaternary structure, homotrimer.

In terms of biological role, P-II indirectly controls the transcription of the glutamine synthetase gene (glnA). P-II prevents NR-II-catalyzed conversion of NR-I to NR-I-phosphate, the transcriptional activator of glnA. When P-II is uridylylated to P-II-UMP, these events are reversed. When the ratio of Gln to 2-ketoglutarate decreases, P-II is uridylylated to P-II-UMP, which causes the deadenylation of glutamine synthetase, so activating the enzyme. In Rhodobacter capsulatus (Rhodopseudomonas capsulata), this protein is Nitrogen regulatory protein P-II (glnB).